We begin with the raw amino-acid sequence, 165 residues long: 2-C-methyl-D-erythritol 2,4-cyclodiphosphate synthase (165 aa).

Residues aspartate 8 and histidine 10 each contribute to the a divalent metal cation site. Residues 8 to 10 and 34 to 35 each bind 4-CDP-2-C-methyl-D-erythritol 2-phosphate; these read DVH and HS. Histidine 42 contacts a divalent metal cation. 4-CDP-2-C-methyl-D-erythritol 2-phosphate-binding positions include 56 to 58, 61 to 65, 100 to 106, 132 to 135, phenylalanine 139, and arginine 142; these read DIG, FPDTD, AQAPKMA, and TTTE.

This sequence belongs to the IspF family. In terms of assembly, homotrimer. Requires a divalent metal cation as cofactor.

It carries out the reaction 4-CDP-2-C-methyl-D-erythritol 2-phosphate = 2-C-methyl-D-erythritol 2,4-cyclic diphosphate + CMP. The protein operates within isoprenoid biosynthesis; isopentenyl diphosphate biosynthesis via DXP pathway; isopentenyl diphosphate from 1-deoxy-D-xylulose 5-phosphate: step 4/6. Functionally, involved in the biosynthesis of isopentenyl diphosphate (IPP) and dimethylallyl diphosphate (DMAPP), two major building blocks of isoprenoid compounds. Catalyzes the conversion of 4-diphosphocytidyl-2-C-methyl-D-erythritol 2-phosphate (CDP-ME2P) to 2-C-methyl-D-erythritol 2,4-cyclodiphosphate (ME-CPP) with a corresponding release of cytidine 5-monophosphate (CMP). The chain is 2-C-methyl-D-erythritol 2,4-cyclodiphosphate synthase from Pectobacterium atrosepticum (strain SCRI 1043 / ATCC BAA-672) (Erwinia carotovora subsp. atroseptica).